A 339-amino-acid polypeptide reads, in one-letter code: HTH-type transcriptional regulator SyrM 2 (339 aa).

Residues V32–T89 form the HTH lysR-type domain. Positions I49 to S68 form a DNA-binding region, H-T-H motif.

Belongs to the LysR transcriptional regulatory family.

Acts in trans to stimulate nod gene expression. This Sinorhizobium fredii (strain NBRC 101917 / NGR234) protein is HTH-type transcriptional regulator SyrM 2 (syrM2).